We begin with the raw amino-acid sequence, 143 residues long: Peptide methionine sulfoxide reductase MsrB (143 aa).

Positions 16–139 constitute a MsrB domain; that stretch reads DAELRRRLTP…NSAALNFESR (124 aa). Residues Cys55, Cys58, Cys104, and Cys107 each coordinate Zn(2+). The active-site Nucleophile is Cys128.

Belongs to the MsrB Met sulfoxide reductase family. Zn(2+) serves as cofactor.

It catalyses the reaction L-methionyl-[protein] + [thioredoxin]-disulfide + H2O = L-methionyl-(R)-S-oxide-[protein] + [thioredoxin]-dithiol. The protein is Peptide methionine sulfoxide reductase MsrB of Burkholderia cenocepacia (strain HI2424).